A 662-amino-acid chain; its full sequence is Pollen receptor-like kinase 1 (662 aa).

The first 31 residues, 1–31 (MPPMQARTLSVYNVMVPLVCLLLFFSTPTHG), serve as a signal peptide directing secretion. At 32–256 (LSDSEAILKF…ARPKSSSRGP (225 aa)) the chain is on the extracellular side. 6 LRR repeats span residues 79-98 (QMEN…SGLT), 99-121 (SLRT…KKLA), 122-144 (ALKS…AFEG), 147-169 (WLKK…VAKL), 171-191 (KLLE…EFEH), and 192-214 (QLHL…LSMT). Residue Asn-197 is glycosylated (N-linked (GlcNAc...) asparagine). Residues 233 to 253 (ECDSPYIEHPPQSEARPKSSS) are disordered. Residues 257–277 (LVITAIVAALTILIILGVIFL) traverse the membrane as a helical segment. Over 278 to 662 (LNRSYKNKKP…GESCESISFA (385 aa)) the chain is Cytoplasmic. The disordered stretch occupies residues 288–330 (RLAVETGPSSLQKKTGIREADQSRRDRKKADHRKGSGTTKRMG). Positions 357–639 (KASAEILGSG…EREGDDDDFY (283 aa)) constitute a Protein kinase domain. Phosphoserine is present on Ser-359. ATP-binding positions include 363–371 (LGSGCFGAS) and Lys-385. Ser-437 carries the phosphoserine modification. Thr-457 carries the phosphothreonine modification. Residue Tyr-527 is modified to Phosphotyrosine. The disordered stretch occupies residues 636–662 (DDFYSTYVSETDGRSSKGESCESISFA). The span at 646–655 (TDGRSSKGES) shows a compositional bias: basic and acidic residues.

It belongs to the protein kinase superfamily. Ser/Thr protein kinase family. As to quaternary structure, interacts in vitro with ROPGEF1 (via PRONE domain). Expressed in pollen and/or in flowers, but not in leaves.

It localises to the cell membrane. It catalyses the reaction L-seryl-[protein] + ATP = O-phospho-L-seryl-[protein] + ADP + H(+). The enzyme catalyses L-threonyl-[protein] + ATP = O-phospho-L-threonyl-[protein] + ADP + H(+). In terms of biological role, receptor-like kinase involved in the control of pollen germination and pollen tube polar growth. This chain is Pollen receptor-like kinase 1, found in Arabidopsis thaliana (Mouse-ear cress).